Consider the following 141-residue polypeptide: Protein KRTCAP2 homolog (141 aa).

Transmembrane regions (helical) follow at residues 11–31 (VVSS…LRFC), 42–62 (VLLG…CVSN), 74–94 (AKLL…AGLV), and 97–117 (VCAT…NRIS).

Belongs to the KRTCAP2 family. As to quaternary structure, component of the oligosaccharyltransferase (OST) complex.

The protein localises to the membrane. Its function is as follows. Subunit of the oligosaccharyl transferase (OST) complex that catalyzes the initial transfer of a defined glycan (Glc(3)Man(9)GlcNAc(2) in eukaryotes) from the lipid carrier dolichol-pyrophosphate to an asparagine residue within an Asn-X-Ser/Thr consensus motif in nascent polypeptide chains, the first step in protein N-glycosylation. N-glycosylation occurs cotranslationally and the complex associates with the Sec61 complex at the channel-forming translocon complex that mediates protein translocation across the endoplasmic reticulum (ER). All subunits are required for a maximal enzyme activity. The chain is Protein KRTCAP2 homolog from Drosophila melanogaster (Fruit fly).